The chain runs to 184 residues: NADH-quinone oxidoreductase subunit B (184 aa).

Cys-37, Cys-38, Cys-103, and Cys-132 together coordinate [4Fe-4S] cluster.

This sequence belongs to the complex I 20 kDa subunit family. NDH-1 is composed of 14 different subunits. Subunits NuoB, C, D, E, F, and G constitute the peripheral sector of the complex. [4Fe-4S] cluster is required as a cofactor.

It localises to the cell membrane. It catalyses the reaction a quinone + NADH + 5 H(+)(in) = a quinol + NAD(+) + 4 H(+)(out). Its function is as follows. NDH-1 shuttles electrons from NADH, via FMN and iron-sulfur (Fe-S) centers, to quinones in the respiratory chain. The immediate electron acceptor for the enzyme in this species is believed to be a menaquinone. Couples the redox reaction to proton translocation (for every two electrons transferred, four hydrogen ions are translocated across the cytoplasmic membrane), and thus conserves the redox energy in a proton gradient. This is NADH-quinone oxidoreductase subunit B from Mycobacterium sp. (strain JLS).